A 101-amino-acid polypeptide reads, in one-letter code: Integration host factor subunit alpha (101 aa).

Belongs to the bacterial histone-like protein family. As to quaternary structure, heterodimer of an alpha and a beta chain.

This protein is one of the two subunits of integration host factor, a specific DNA-binding protein that functions in genetic recombination as well as in transcriptional and translational control. This chain is Integration host factor subunit alpha, found in Saccharophagus degradans (strain 2-40 / ATCC 43961 / DSM 17024).